The following is a 420-amino-acid chain: MLALSPATRDGCDGASEFLDTSCGFTIINPEEEEEFPDFADHGDLLDIIDFDDIFGVAGDVLPDLEIDPEILSGDFSNHMNASSTITTTSDKTDSQGETTKGSSGKGEEVVSKRDDVAAETVTYDGDSDRKRKYSSSASSKNNRISNNEGKRKVKVDWTPELHRRFVEAVEQLGVDKAVPSRILELMGVHCLTRHNVASHLQKYRSHRKHLLAREAEAANWTRKRHIYGVDTGANLNGRTKNGWLAPAPTLGFPPPPPVAVAPPPVHHHHFRPLHVWGHPTVDQSIMPHVWPKHLPPPSTAMPNPPFWVSDSPYWHPMHNGTTPYLPTVATRFRAPPVAGIPHALPPHHTMYKPNLGFGGARPPVDLHPSKESVDAAIGDVLTRPWLPLPLGLNPPAVDGVMTELHRHGVSEVPPTASCA.

A disordered region spans residues G74 to R152. The span at K106–V117 shows a compositional bias: basic and acidic residues. Low complexity predominate over residues S135 to N147. Positions G150–K209 form a DNA-binding region, myb-like GARP.

As to quaternary structure, interacts with NAC92. Expressed in rosette and cauline leaves. Expressed at low levels in cotyledons and shoots.

The protein localises to the nucleus. Transcriptional activator that functions with GLK2 to promote chloroplast development. Acts as an activator of nuclear photosynthetic genes involved in chlorophyll biosynthesis, light harvesting, and electron transport. Acts in a cell-autonomous manner to coordinate and maintain the photosynthetic apparatus within individual cells. May function in photosynthetic capacity optimization by integrating responses to variable environmental and endogenous cues. Prevents premature senescence. This Arabidopsis thaliana (Mouse-ear cress) protein is Transcription activator GLK1 (GLK1).